The following is a 364-amino-acid chain: DNA polymerase IV (364 aa).

The region spanning 14-198 (IIHIDMDAFF…LPIEKFHGVG (185 aa)) is the UmuC domain. Residues aspartate 18 and aspartate 116 each contribute to the Mg(2+) site. Glutamate 117 is an active-site residue.

Belongs to the DNA polymerase type-Y family. In terms of assembly, monomer. Requires Mg(2+) as cofactor.

The protein localises to the cytoplasm. The enzyme catalyses DNA(n) + a 2'-deoxyribonucleoside 5'-triphosphate = DNA(n+1) + diphosphate. Functionally, poorly processive, error-prone DNA polymerase involved in untargeted mutagenesis. Copies undamaged DNA at stalled replication forks, which arise in vivo from mismatched or misaligned primer ends. These misaligned primers can be extended by PolIV. Exhibits no 3'-5' exonuclease (proofreading) activity. May be involved in translesional synthesis, in conjunction with the beta clamp from PolIII. The sequence is that of DNA polymerase IV from Streptococcus pyogenes serotype M28 (strain MGAS6180).